Here is a 1097-residue protein sequence, read N- to C-terminus: MMNISLRLRRPPWMVDSNGRRMTSHFQWLLLTFILLYLMNQVTSEKRGAPRDLKCITNNLRVWDCSWKAPSAAGHGTVYEICIENRSHSCYQSEKTNTKIPALLPGDHEITINRLYDFGNPISKFTLNEKNVSLIPDTPEILNLSADFSTSTIHLKWNDRGSVFPHQLTVIWEIKILRKENMEIVKLITHNTTVNGKDTVHHWSWTSDMPLECAIHSVGIRCYVDDPHFSGRKEWSDWSPLKNISWSPDSQTKVFPQDKVILVGSDITFCCVTQEKVLSAQIGQTNCPLIHLDGENVAIKIHNISVSANSGTNVVFTTEDNIFGTVIFVGYPPDIPQKVNCETYDLKEIVCTWNPGRPTALVGPRNTSYTLFESFSGKYVRFKRVEAPTNESYQLFFQMRPNQEIYNFTLNARNPLGRSESTILINITEKVYPRIPTSIKVKDINSTAVMLSWHLPGNFAKIKLLCQIEINKTNSVQELRNVTIKGVENSSYLVAVDKLNPYTIYTFRIRCSTETFWKWSKWSNEKKYLTTEAIPSKGPDTWREWSSDGKNLIIYWKPLPINEANGKILSYNVSCSLDEETQSLSEIPDPQHKAELQLDKNDYIISVVAKNSVGSSPPSKIASMEIPNDDLKVEQAVGMGNGILLTWNYDPNMTCDYVIKWCNSSRSEPCLMDWKKVPSNSTEAVIESDQFRPGVRYSFFLYGCRNEGYQLLRSIIGYIEELAPIVAPNFTVEDTSADSILVKWEDIPVEELRGFLRGYLFYFEKGERDTSKIRGLESGRSDIKVKNITDLSQKTLRIADLQGKTSYHLVLRAYTDGGMGPEKSMFVVTKENSVGLIIAILIPVAVAVIVGVVTSILCYRKREWIKETFYPDIPNPENCKALQFQKSVCEGNSALKTLEMNPCTPNNVEVLETRSAVPKIEDTEIISPIAERPEESSDAEAENHVVVSYCPPVIEEETPNPGADEAGGASQVVYIDIQSMYQPQAKPEEEQENDPVGGAGYKPQMHLPVTSTVEDLAAEDDLDKAAGYRPQANVNTWNLVSPDSPRSTDSNSEIVSFGSPCSINSRQFLIPPKDEDSPKSSGGGWSFTNFFQNKPND.

Residues Met-1 to Ser-44 form the signal peptide. Residues Glu-45–Ser-833 are Extracellular-facing. In terms of domain architecture, Fibronectin type-III 1 spans Lys-46–Asn-131. 2 disulfides stabilise this stretch: Cys-55-Cys-65 and Cys-82-Cys-90. 6 N-linked (GlcNAc...) asparagine glycosylation sites follow: Asn-85, Asn-131, Asn-143, Asn-191, Asn-243, and Asn-303. Cys-213 and Cys-270 are oxidised to a cystine. Fibronectin type-III domains lie at Pro-332–Arg-434, Ile-435–Ile-534, Gly-538–Asp-629, Pro-627–Ile-719, and Pro-724–Ser-833. Cys-341 and Cys-351 are disulfide-bonded. Residues Asn-366, Asn-390, Asn-407, Asn-426, Asn-445, Asn-471, Asn-481, and Asn-489 are each glycosylated (N-linked (GlcNAc...) asparagine). A disulfide bridge links Cys-466 with Cys-511. The short motif at Trp-519–Ser-523 is the WSXWS motif element. Residues Asn-572, Asn-652, Asn-663, Asn-680, Asn-729, and Asn-787 are each glycosylated (N-linked (GlcNAc...) asparagine). Residues Val-834 to Thr-854 traverse the membrane as a helical segment. Over Ser-855–Asp-1097 the chain is Cytoplasmic. Residues Phe-869 to Glu-877 carry the Box 1 motif motif. Ser-927 carries the post-translational modification Phosphoserine. 2 disordered regions span residues Gln-982 to Met-1005 and Leu-1022 to Asp-1097. Composition is skewed to polar residues over residues Ala-1032 to Gln-1067 and Ser-1086 to Asp-1097. Phosphoserine is present on Ser-1044.

The protein belongs to the type I cytokine receptor family. Type 2 subfamily. As to quaternary structure, heterodimer composed of LIFR and IL6ST. The heterodimer formed by LIFR and IL6ST interacts with the complex formed by CNTF and CNTFR.

The protein resides in the cell membrane. Its function is as follows. Signal-transducing molecule. May have a common pathway with IL6ST. The soluble form inhibits the biological activity of LIF by blocking its binding to receptors on target cells. This is Leukemia inhibitory factor receptor (LIFR) from Canis lupus familiaris (Dog).